Reading from the N-terminus, the 882-residue chain is MNTADVPDNLQSWGQQPSSSYSNTQQHSQMTNLPPINHNNLCDTEPMNEDFQLQDVQADELQKQQKQQEQQHIQQQNAQRFIAQSRQPHSNILRFPQPPITSIKTNSHAFYPQQEVTQVRPKKHRVSMTNAEAALTPGMPPEKQAAKKRNIGQFSTDTVPAGIGMIGIPFESTSKPLQIQQFRNPQDAPVRKLTSDLIKTYKAINESFYLRKQVRRDRHKSQDAGKPKGSKDGSGASLTDTFSIHNAIPITSSDNHYQQDAHQNAPPLLDTNAPPTSTMVVPMRTETDLQQQQRQKSSRGGPYNNGYDDQNYDYILKNGEIFDKRYVILSDTPVGKGSFGQVTKAYDTLNKEEVAIKIIKNKKTFFDQAQIEIHLLELTNAHDKDNKYNIVTLKGHFVHRAHLCLVFELLSYNLYDLLKNTSFRGVSLNLARKFAQQLGKTLLFLSSPELSIIHCDLKPENVLLVNAKRSQIRVIDFGSSCQTGHRIYQYIQSRFYRSPEVLLGIAYDTKIDMWSLGCILVEMHTGEPLFAGSSEVDQMMKIVEVLGMPPKEMLDIGPKTHKYFDKTEDGIYYCKKTRDGYRHTYKAPGARKLHEILGVTSGGPGGRRLGEPGHSVEDYSKFKDLIKRMLQFDPKQRISPYYVVRHPFLKQKEERVPSQPPVSHSNLQQQQQLYIQQPSSQMSQVMESPSVGSVYVEDNGMYRQAPGSSANPISVTSSFDEGDAMEVDAGRRRFSAHQQNYHNPNYQYSQPQQQQQQQYQQTQRTQLEQQQKQAQLQQQLQQQQMQQQQQQQQQRQHMPQAQSSSQQHLQSRARPRQQDQNEWRNQFELDDTFQQKQRKVDDSVSNQISRNQFNPQQVSMTHGNVNANNREMEKLDYPNNKL.

Residues 1-42 (MNTADVPDNLQSWGQQPSSSYSNTQQHSQMTNLPPINHNNLC) show a composition bias toward polar residues. Disordered regions lie at residues 1–45 (MNTA…CDTE), 62–81 (QKQQKQQEQQHIQQQNAQRF), 212–239 (KQVRRDRHKSQDAGKPKGSKDGSGASLT), and 255–308 (NHYQ…NGYD). Low complexity predominate over residues 64–79 (QQKQQEQQHIQQQNAQ). The span at 220-231 (KSQDAGKPKGSK) shows a compositional bias: basic and acidic residues. A compositionally biased stretch (low complexity) spans 290 to 308 (QQQQRQKSSRGGPYNNGYD). In terms of domain architecture, Protein kinase spans 328 to 649 (ILSDTPVGKG…PYYVVRHPFL (322 aa)). Residues 334–342 (VGKGSFGQV) and Lys357 contribute to the ATP site. Asp456 functions as the Proton acceptor in the catalytic mechanism. 2 disordered regions span residues 742–761 (HNPNYQYSQPQQQQQQQYQQ) and 789–882 (QQQQ…NNKL). Composition is skewed to low complexity over residues 747-761 (QYSQPQQQQQQQYQQ) and 789-810 (QQQQQQRQHMPQAQSSSQQHLQ). Over residues 816 to 827 (RQQDQNEWRNQF) the composition is skewed to basic and acidic residues. Over residues 843-869 (SVSNQISRNQFNPQQVSMTHGNVNANN) the composition is skewed to polar residues.

This sequence belongs to the protein kinase superfamily. CMGC Ser/Thr protein kinase family. MNB/DYRK subfamily. It depends on Mg(2+) as a cofactor. As to expression, expressed in all somatic cells.

Its subcellular location is the nucleus. It catalyses the reaction L-seryl-[protein] + ATP = O-phospho-L-seryl-[protein] + ADP + H(+). It carries out the reaction L-threonyl-[protein] + ATP = O-phospho-L-threonyl-[protein] + ADP + H(+). The catalysed reaction is L-tyrosyl-[protein] + ATP = O-phospho-L-tyrosyl-[protein] + ADP + H(+). Functionally, possible role in the function of olfactory neurons. This Caenorhabditis elegans protein is Dual specificity tyrosine-phosphorylation-regulated kinase mbk-1.